The following is a 376-amino-acid chain: uncharacterized protein (376 aa).

The protein belongs to the YCR102c/YLR460c/YNL134c family.

This is an uncharacterized protein from Saccharomyces cerevisiae (strain ATCC 204508 / S288c) (Baker's yeast).